Reading from the N-terminus, the 351-residue chain is Methionine import ATP-binding protein MetN (351 aa).

The 240-residue stretch at 2-241 (IVTEALTKAF…PQHAVTRAFV (240 aa)) folds into the ABC transporter domain. 38–45 (GRSGAGKS) contacts ATP.

It belongs to the ABC transporter superfamily. Methionine importer (TC 3.A.1.24) family. In terms of assembly, the complex is composed of two ATP-binding proteins (MetN), two transmembrane proteins (MetI) and a solute-binding protein (MetQ).

The protein resides in the cell inner membrane. The enzyme catalyses L-methionine(out) + ATP + H2O = L-methionine(in) + ADP + phosphate + H(+). It carries out the reaction D-methionine(out) + ATP + H2O = D-methionine(in) + ADP + phosphate + H(+). In terms of biological role, part of the ABC transporter complex MetNIQ involved in methionine import. Responsible for energy coupling to the transport system. The sequence is that of Methionine import ATP-binding protein MetN from Rhodospirillum rubrum (strain ATCC 11170 / ATH 1.1.1 / DSM 467 / LMG 4362 / NCIMB 8255 / S1).